The following is a 296-amino-acid chain: MTVQEMILTLQKFWAEQGCLTMQAYDVEKGAGTMNPMTFLRSLGPEPWNVCYTEPSRRPADGRYGENPNRLYQHHQFQVIMKPSPDNIQELYLQSLELLGINPLEHDIRFVEDNWENPTFGAAGLGWEVWLNGMEITQFTYFQQVGGIECNPIAVEITYGIERLASYIQDVESVFDLVWTDGFKYGDIFYQPEFEHSKYTFETSDVDLLFTLFDQYEKEANRALDENLVFPAYDYILKCSHTFNLLDAKGAISVTERTGFIHRVRNMSRRCAQSFIEERERLGFPLIKSKAGESHA.

It belongs to the class-II aminoacyl-tRNA synthetase family. Tetramer of two alpha and two beta subunits.

Its subcellular location is the cytoplasm. It catalyses the reaction tRNA(Gly) + glycine + ATP = glycyl-tRNA(Gly) + AMP + diphosphate. The chain is Glycine--tRNA ligase alpha subunit from Exiguobacterium sibiricum (strain DSM 17290 / CCUG 55495 / CIP 109462 / JCM 13490 / 255-15).